Here is a 232-residue protein sequence, read N- to C-terminus: Nucleolar protein 16 (232 aa).

The segment covering 1–14 has biased composition (basic residues); it reads MGRELQKRKKRSSR. 2 disordered regions span residues 1-20 and 113-161; these read MGRELQKRKKRSSRAKVQTH and RSDN…QSSR. A compositionally biased stretch (basic and acidic residues) spans 132–154; it reads EEPKPKNPTHDIEWHGISDDRQE.

The protein belongs to the NOP16 family. Component of the pre-66S ribosomal particle.

It is found in the nucleus. The protein localises to the nucleolus. Involved in the biogenesis of the 60S ribosomal subunit. This chain is Nucleolar protein 16 (nop-16), found in Neurospora crassa (strain ATCC 24698 / 74-OR23-1A / CBS 708.71 / DSM 1257 / FGSC 987).